The sequence spans 901 residues: MAAQNEQRPERIKTTPYLEGDVLSSDSGPLLSVFALQEIMQKVRQVQADYMTATREVDFTVPDVQKILDDIKALAAEQVSKIVKMPSISFRHIVMQARDRVLRVDTYYEEMSQVGDVITEDEPEKFYSTIIKKVRFIRGKGSFILHDIPTRDHRGMEVAEPEVLGVEFKNVLPVLTAEHRAMIQNALDGSIIENGNVATRDVDVFIGACSEPVYRIYNRLQGYIEAVQLQELRNSIGWLERLGQRKRITYSQEVLTEFRRQDTIWVLALQLPVNPQVVWDVPRSSIANLIMNIATCLPTGEYIAPNPRISSITLTQRITTTGPFAILTGSTPTAQQLNDVRKIYLALMFPGQIILDLKIDPGERMDPAVRMVAGVVGHLLFTAGGRFTNLTQNMARQLDIALNDYLLYMYNTRVQVNYGPTGEPLDFQIGRNQYDCNVFRADFGSGAGYNGWATIDVEYREPAPYVHAQRYIRYCGIDSRELINPTTYGIGMTYHCYNEMLRMLVAAGKDSEAAYFRSMLPFHMVRFARINQIINEDLHSVFSLPDDMFNALLPDLIAGAHQNADPVVLDVSWISLWFAFNRSFEPTHRNEMLEVAPLIESVYASELSVMKVDMRHLSLMQRRFPDVLIQARPSHFWKAVLNDSPEAVKAVMNLSHSHNFINIRDMMRWVMLPSLQPSLKLVLEEEAWAAANDFEDLMLTDQVYMHRDMLPEPRLDDVERFRQEGFYYTNMLEAPPEIDRVVQYTYEIARLQANMGQFRAALRRIMDDDDWVRFGGVLRTVRVKFVDARPPDDVLQGLPFSYDTNEKGGLAYATIKYATETTIFYLIYNVEFSNTPDSLVLINPTYTMTKVFINKRIVERVRVRQILAVLNRRFVAYKGKMRIMDITQSLKMGTKLAAPTV.

This sequence belongs to the orbivirus VP3 family.

It is found in the virion. Its function is as follows. The VP3 protein is one of the five proteins (with VP1, VP4, VP6 and VP7) which form the inner capsid of the virus. The protein is Core protein VP3 (Segment-3) of Antilocapra americana (Pronghorn).